The sequence spans 314 residues: Versiconal hemiacetal acetate esterase (314 aa).

An Involved in the stabilization of the negatively charged intermediate by the formation of the oxyanion hole motif is present at residues 85–87 (HGG). Residues Ser-154, Asp-255, and His-285 contribute to the active site.

This sequence belongs to the 'GDXG' lipolytic enzyme family.

It catalyses the reaction (2S,3S)-versiconal hemiacetal acetate + H2O = (2S-3S)-versiconal hemiacetal + acetate + H(+). It carries out the reaction (3S)-versiconol acetate + H2O = (S)-versiconol + acetate + H(+). Its pathway is mycotoxin biosynthesis; aflatoxin biosynthesis. Functionally, versiconal hemiacetal acetate esterase; part of the gene cluster that mediates the biosynthesis of aflatoxins, a group of polyketide-derived furanocoumarins, and part of the most toxic and carcinogenic compounds among the known mycotoxins. The four major aflatoxins produced by A.parasiticus are aflatoxin B1 (AFB1), aflatoxin B2 (AFB2), aflatoxin G1 (AFG1) and aflatoxin G2 (AFG2). Within the aflatoxin pathway, the versiconal hemiacetal acetate esterase aflJ converts versiconal hemiacetal acetate (VHA) into versiconal (VAL). The biosynthesis of aflatoxins begins with the norsolorinic acid synthase aflC that combines a hexanoyl starter unit produced by the fatty acid synthase aflA/aflB and 7 malonyl-CoA extender units to synthesize the precursor NOR. The second step is the conversion of NOR to averantin and requires the norsolorinic acid ketoreductase aflD, which catalyzes the dehydration of norsolorinic acid to form (1'S)-averantin. The norsolorinic acid reductases aflE and aflF may also play a role in the conversion of NOR to AVN. The cytochrome P450 monooxygenase aflG then catalyzes the hydroxylation of AVN to 5'hydroxyaverantin (HAVN). The next step is performed by the 5'-hydroxyaverantin dehydrogenase aflH that transforms HAVN to 5'-oxoaverantin (OAVN) which is further converted to averufin (AVF) by aflK that plays a dual role in the pathway, as a 5'-oxoaverantin cyclase that mediates conversion of 5'-oxoaverantin, as well as a versicolorin B synthase in a later step in the pathway. The averufin oxidase aflI catalyzes the conversion of AVF to versiconal hemiacetal acetate (VHA). VHA is then the substrate for the versiconal hemiacetal acetate esterase aflJ to yield versiconal (VAL). Versicolorin B synthase aflK then converts VAL to versicolorin B (VERB) by closing the bisfuran ring of aflatoxin which is required for DNA-binding, thus giving to aflatoxin its activity as a mutagen. Then, the activity of the versicolorin B desaturase aflL leads to versicolorin A (VERA). A branch point starts from VERB since it can also be converted to dihydrodemethylsterigmatocystin (DMDHST), probably also by aflL, VERA being a precursor for aflatoxins B1 and G1, and DMDHST for aflatoxins B2 and G2. Next, the versicolorin reductase aflM and the cytochrome P450 monooxygenase aflN are involved in conversion of VERA to demethylsterigmatocystin (DMST). AflX and aflY seem also involved in this step, through probable aflX-mediated epoxide ring-opening step following versicolorin A oxidation and aflY-mediated Baeyer-Villiger oxidation required for the formation of the xanthone ring. The methyltransferase aflO then leads to the modification of DMST to sterigmatocystin (ST), and of DMDHST to dihydrosterigmatocystin (DHST). Both ST and DHST are then substrates of the O-methyltransferase aflP to yield O-methylsterigmatocystin (OMST) and dihydro-O-methylsterigmatocystin (DHOMST), respectively. Finally OMST is converted to aflatoxins B1 and G1, and DHOMST to aflatoxins B2 and G2, via the action of several enzymes including O-methylsterigmatocystin oxidoreductase aflQ, the cytochrome P450 monooxygenase aflU, but also the NADH-dependent flavin oxidoreductase nadA which is specifically required for the synthesis of AFG1. The chain is Versiconal hemiacetal acetate esterase from Aspergillus parasiticus (strain ATCC 56775 / NRRL 5862 / SRRC 143 / SU-1).